A 242-amino-acid polypeptide reads, in one-letter code: Zinc finger protein ZOP1 (242 aa).

Residues 11–42 form a Matrin-type zinc finger; it reads KWCEFCKIWIQNNPTSIRNHDLGKRHRECVDK. Residues 42 to 71 are a coiled coil; that stretch reads KKLTDMRERSAAKDKELKKNEKLLQQIEAK. The disordered stretch occupies residues 154-242; it reads VKKPVSSSGA…PLLGLYNRPF (89 aa). The span at 155–172 shows a compositional bias: low complexity; it reads KKPVSSSGAGPSVGKPPG. A compositionally biased stretch (basic and acidic residues) spans 201-233; that stretch reads RQDEKPKKVSAEEKAALKAREAARKRVEDREKP.

Component of a pre-mRNA splicing complex. Interacts with STA1. Interacts with PRP31.

Its subcellular location is the nucleus. It is found in the cajal body. In terms of biological role, nucleic acid-binding protein that promotes Pol IV-dependent small interfering RNA (siRNA) accumulation, DNA methylation and transcriptional silencing. May possess both RNA-directed DNA methylation (RdDM)-dependent and -independent roles in transcriptional silencing. Acts as a pre-mRNA splicing factor that associates with several typical components of the splicing machinery as well as with Pol II. The sequence is that of Zinc finger protein ZOP1 from Arabidopsis thaliana (Mouse-ear cress).